Reading from the N-terminus, the 333-residue chain is Glyceraldehyde-3-phosphate dehydrogenase (333 aa).

Residues 12 to 13 (RI), Asp36, Arg80, and Ser120 contribute to the NAD(+) site. D-glyceraldehyde 3-phosphate contacts are provided by residues 150–152 (SCT), Thr181, Arg196, 209–210 (TG), and Arg232. Cys151 acts as the Nucleophile in catalysis. An NAD(+)-binding site is contributed by Asn314.

This sequence belongs to the glyceraldehyde-3-phosphate dehydrogenase family. In terms of assembly, homotetramer.

It localises to the cytoplasm. The enzyme catalyses D-glyceraldehyde 3-phosphate + phosphate + NAD(+) = (2R)-3-phospho-glyceroyl phosphate + NADH + H(+). Its pathway is carbohydrate degradation; glycolysis; pyruvate from D-glyceraldehyde 3-phosphate: step 1/5. Catalyzes the oxidative phosphorylation of glyceraldehyde 3-phosphate (G3P) to 1,3-bisphosphoglycerate (BPG) using the cofactor NAD. The first reaction step involves the formation of a hemiacetal intermediate between G3P and a cysteine residue, and this hemiacetal intermediate is then oxidized to a thioester, with concomitant reduction of NAD to NADH. The reduced NADH is then exchanged with the second NAD, and the thioester is attacked by a nucleophilic inorganic phosphate to produce BPG. This Cereibacter sphaeroides (Rhodobacter sphaeroides) protein is Glyceraldehyde-3-phosphate dehydrogenase (gapB).